A 117-amino-acid chain; its full sequence is Antimicrobial peptide AmAMP1 (117 aa).

The signal sequence occupies residues 1-25 (MPSIRVLFVLLAVILLFMEVKMTSA). The propeptide occupies 26 to 73 (ASIVKDVDEDETLENEDGEAMENSWPWHGVEDTSDYSDLSDLANSEKR). 3 disulfide bridges follow: Cys76–Cys115, Cys85–Cys108, and Cys94–Cys112.

The protein belongs to the coral AMP family.

The protein localises to the secreted. Functionally, coral peptide that probably acts as an antimicrobial peptide in the surface mucous layer of planula larvae and likely also in adults. Shows moderate to high activity against some Gram-negative and Gram-positive bacteria (tested on E.coli, B.megaterium, S.aureus, E.aesturaii, B.algicola, Acinetobacter spec.). Does not show antibacterial activity against the coral pathogen V.coralliilyticus. The polypeptide is Antimicrobial peptide AmAMP1 (Acropora millepora (Staghorn coral)).